The chain runs to 484 residues: MSMTTSRERNVPPDDNEIELGRSRHSDVAPESESPQAHLLNSDVASVTKNFMRNASHATANSGAIAAVLSYCIASISMTVINKFTVSGEKFTMNLLVLLCQCSVGVAMVYAAKCMGWIQIRTLNMRDVKTWFPISTMLVFVIYTGSKALQHMDIPIYTIFKNLTIILIAYGELLWFNGRITPMVFLSFILMVLSSIIAAWPDLAPSTAKTLYSRAFESLNLYTGVPHATEGWGEGVRTEAASAMHPHTALSPLSVKPYVGAATPLAAAVAQQNSEAAASSSTLSSWSTNGYVWMLANCMISATYVLVMRKRIKLTGFKDWDTMFYNNLLSIPVLLFMSLLVENWSVETFEHNFPREKRSTLVFAILLSGTGGVFISYTTAWCIRVTSSTTYSMVGALNKLPLALSGMLFFGNPVTPYNSIGVAVGFIAGIVYAVGKYKQVVAARIANSDATGASTSLSSSSSAAPSGEYVFDLKGEIPTHTRQQ.

Composition is skewed to basic and acidic residues over residues 1 to 12 (MSMTTSRERNVP) and 19 to 28 (ELGRSRHSDV). The disordered stretch occupies residues 1-34 (MSMTTSRERNVPPDDNEIELGRSRHSDVAPESES). The Cytoplasmic segment spans residues 1 to 60 (MSMTTSRERNVPPDDNEIELGRSRHSDVAPESESPQAHLLNSDVASVTKNFMRNASHATA). A helical membrane pass occupies residues 61-81 (NSGAIAAVLSYCIASISMTVI). The Lumenal segment spans residues 82–90 (NKFTVSGEK). Residues 91-111 (FTMNLLVLLCQCSVGVAMVYA) traverse the membrane as a helical segment. Topologically, residues 112–129 (AKCMGWIQIRTLNMRDVK) are cytoplasmic. Residues 130–150 (TWFPISTMLVFVIYTGSKALQ) traverse the membrane as a helical segment. Over 151-155 (HMDIP) the chain is Lumenal. Residues 156–176 (IYTIFKNLTIILIAYGELLWF) form a helical membrane-spanning segment. The Cytoplasmic portion of the chain corresponds to 177 to 179 (NGR). Residues 180–200 (ITPMVFLSFILMVLSSIIAAW) form a helical membrane-spanning segment. The Lumenal portion of the chain corresponds to 201-287 (PDLAPSTAKT…ASSSTLSSWS (87 aa)). A helical membrane pass occupies residues 288 to 308 (TNGYVWMLANCMISATYVLVM). The Cytoplasmic portion of the chain corresponds to 309–321 (RKRIKLTGFKDWD). The helical transmembrane segment at 322-342 (TMFYNNLLSIPVLLFMSLLVE) threads the bilayer. The N-linked (GlcNAc...) asparagine glycan is linked to Asn-343. At 343–360 (NWSVETFEHNFPREKRST) the chain is on the lumenal side. A helical transmembrane segment spans residues 361-381 (LVFAILLSGTGGVFISYTTAW). At 382-390 (CIRVTSSTT) the chain is on the cytoplasmic side. Residues 391 to 411 (YSMVGALNKLPLALSGMLFFG) traverse the membrane as a helical segment. Residues 412–413 (NP) are Lumenal-facing. Residues 414-434 (VTPYNSIGVAVGFIAGIVYAV) traverse the membrane as a helical segment. The Cytoplasmic segment spans residues 435–484 (GKYKQVVAARIANSDATGASTSLSSSSSAAPSGEYVFDLKGEIPTHTRQQ).

The protein belongs to the TPT transporter family. SLC35D subfamily. As to quaternary structure, homooligomer.

It is found in the golgi apparatus membrane. The protein resides in the cytoplasmic vesicle membrane. It localises to the endoplasmic reticulum membrane. Functionally, involved in the import of GDP-mannose from the cytoplasm into the Golgi lumen. The protein is GDP-mannose transporter (VRG4) of Malassezia globosa (strain ATCC MYA-4612 / CBS 7966) (Dandruff-associated fungus).